Here is a 423-residue protein sequence, read N- to C-terminus: Serine--tRNA ligase (423 aa).

230–232 (TAE) is a binding site for L-serine. 261–263 (RQE) lines the ATP pocket. Residue Glu-284 participates in L-serine binding. 348–351 (EISS) is an ATP binding site. L-serine is bound at residue Ser-384.

The protein belongs to the class-II aminoacyl-tRNA synthetase family. Type-1 seryl-tRNA synthetase subfamily. In terms of assembly, homodimer. The tRNA molecule binds across the dimer.

Its subcellular location is the cytoplasm. It catalyses the reaction tRNA(Ser) + L-serine + ATP = L-seryl-tRNA(Ser) + AMP + diphosphate + H(+). It carries out the reaction tRNA(Sec) + L-serine + ATP = L-seryl-tRNA(Sec) + AMP + diphosphate + H(+). The protein operates within aminoacyl-tRNA biosynthesis; selenocysteinyl-tRNA(Sec) biosynthesis; L-seryl-tRNA(Sec) from L-serine and tRNA(Sec): step 1/1. In terms of biological role, catalyzes the attachment of serine to tRNA(Ser). Is also able to aminoacylate tRNA(Sec) with serine, to form the misacylated tRNA L-seryl-tRNA(Sec), which will be further converted into selenocysteinyl-tRNA(Sec). The sequence is that of Serine--tRNA ligase from Thermoanaerobacter pseudethanolicus (strain ATCC 33223 / 39E) (Clostridium thermohydrosulfuricum).